Reading from the N-terminus, the 504-residue chain is Maturase K (504 aa).

The protein belongs to the intron maturase 2 family. MatK subfamily.

The protein localises to the plastid. It localises to the chloroplast. Usually encoded in the trnK tRNA gene intron. Probably assists in splicing its own and other chloroplast group II introns. This is Maturase K from Lobularia maritima (Sweet alyssum).